A 142-amino-acid polypeptide reads, in one-letter code: Hemoglobin subunit alpha-A (142 aa).

Residues 2–142 (VLSAADKTNV…VGAVLTAKYR (141 aa)) form the Globin domain. Position 59 (histidine 59) interacts with O2. Histidine 88 is a binding site for heme b.

Belongs to the globin family. Heterotetramer of two alpha chains and two beta chains. In terms of tissue distribution, red blood cells.

Its function is as follows. Involved in oxygen transport from the lung to the various peripheral tissues. The polypeptide is Hemoglobin subunit alpha-A (HBAA) (Mareca penelope (Eurasian wigeon)).